A 189-amino-acid chain; its full sequence is ATP synthase subunit b (189 aa).

Residues 23–43 (IEIVLSLVVFGLLLFAVWKFV) form a helical membrane-spanning segment.

Belongs to the ATPase B chain family. In terms of assembly, F-type ATPases have 2 components, F(1) - the catalytic core - and F(0) - the membrane proton channel. F(1) has five subunits: alpha(3), beta(3), gamma(1), delta(1), epsilon(1). F(0) has three main subunits: a(1), b(2) and c(10-14). The alpha and beta chains form an alternating ring which encloses part of the gamma chain. F(1) is attached to F(0) by a central stalk formed by the gamma and epsilon chains, while a peripheral stalk is formed by the delta and b chains.

The protein resides in the cell membrane. F(1)F(0) ATP synthase produces ATP from ADP in the presence of a proton or sodium gradient. F-type ATPases consist of two structural domains, F(1) containing the extramembraneous catalytic core and F(0) containing the membrane proton channel, linked together by a central stalk and a peripheral stalk. During catalysis, ATP synthesis in the catalytic domain of F(1) is coupled via a rotary mechanism of the central stalk subunits to proton translocation. In terms of biological role, component of the F(0) channel, it forms part of the peripheral stalk, linking F(1) to F(0). The chain is ATP synthase subunit b from Nocardioides sp. (strain ATCC BAA-499 / JS614).